Consider the following 402-residue polypeptide: 1-deoxy-D-xylulose 5-phosphate reductoisomerase (402 aa).

8 residues coordinate NADPH: Thr-10, Gly-11, Ser-12, Ile-13, Gly-36, Arg-37, Asn-38, and Asn-124. 1-deoxy-D-xylulose 5-phosphate is bound at residue Lys-125. Position 126 (Glu-126) interacts with NADPH. Asp-150 lines the Mn(2+) pocket. Ser-151, Glu-152, Ser-186, and His-209 together coordinate 1-deoxy-D-xylulose 5-phosphate. Residue Glu-152 participates in Mn(2+) binding. Gly-215 contributes to the NADPH binding site. The 1-deoxy-D-xylulose 5-phosphate site is built by Ser-222, Asn-227, Lys-228, and Glu-231. Residue Glu-231 coordinates Mn(2+).

This sequence belongs to the DXR family. Mg(2+) serves as cofactor. It depends on Mn(2+) as a cofactor.

It carries out the reaction 2-C-methyl-D-erythritol 4-phosphate + NADP(+) = 1-deoxy-D-xylulose 5-phosphate + NADPH + H(+). Its pathway is isoprenoid biosynthesis; isopentenyl diphosphate biosynthesis via DXP pathway; isopentenyl diphosphate from 1-deoxy-D-xylulose 5-phosphate: step 1/6. With respect to regulation, inhibited by fosmidomycin. Its function is as follows. Catalyzes the NADPH-dependent rearrangement and reduction of 1-deoxy-D-xylulose-5-phosphate (DXP) to 2-C-methyl-D-erythritol 4-phosphate (MEP). The sequence is that of 1-deoxy-D-xylulose 5-phosphate reductoisomerase from Synechococcus sp. (strain ATCC 27144 / PCC 6301 / SAUG 1402/1) (Anacystis nidulans).